Consider the following 258-residue polypeptide: Lyso-ornithine lipid O-acyltransferase (258 aa).

The chain crosses the membrane as a helical span at residues 7-29 (LLRSARLLGLVALGLGLAAWVSL).

This sequence belongs to the 1-acyl-sn-glycerol-3-phosphate acyltransferase family. OlsA subfamily.

It is found in the membrane. The enzyme catalyses a lyso-ornithine lipid + a fatty acyl-[ACP] = an N(2)-[(3R)-3-(acyloxy)acyl]-L-ornithine lipid + holo-[ACP]. It functions in the pathway lipid metabolism. Functionally, catalyzes the second step in the formation of ornithine lipids, which are phosphorus-free membrane lipids. Uses acyl-acyl carrier protein (acyl-AcpP) as an acyl donor and converts lyso-ornithine lipid (LOL) into ornithine lipid (OL). The protein is Lyso-ornithine lipid O-acyltransferase of Pseudomonas aeruginosa (strain ATCC 15692 / DSM 22644 / CIP 104116 / JCM 14847 / LMG 12228 / 1C / PRS 101 / PAO1).